The sequence spans 247 residues: Coproheme decarboxylase (247 aa).

Fe-coproporphyrin III is bound by residues R129, 143-147 (YPMDK), H170, Q183, and S221. The active site involves Y143.

It belongs to the ChdC family. Type 1 subfamily. It depends on Fe-coproporphyrin III as a cofactor.

It catalyses the reaction Fe-coproporphyrin III + 2 H2O2 + 2 H(+) = heme b + 2 CO2 + 4 H2O. It carries out the reaction Fe-coproporphyrin III + H2O2 + H(+) = harderoheme III + CO2 + 2 H2O. The enzyme catalyses harderoheme III + H2O2 + H(+) = heme b + CO2 + 2 H2O. Its pathway is porphyrin-containing compound metabolism; protoheme biosynthesis. In terms of biological role, involved in coproporphyrin-dependent heme b biosynthesis. Catalyzes the decarboxylation of Fe-coproporphyrin III (coproheme) to heme b (protoheme IX), the last step of the pathway. The reaction occurs in a stepwise manner with a three-propionate intermediate. The polypeptide is Coproheme decarboxylase (Bacillus anthracis).